Reading from the N-terminus, the 435-residue chain is Serine--tRNA ligase (435 aa).

240 to 242 (TAE) provides a ligand contact to L-serine. 271–273 (RSE) is an ATP binding site. E294 provides a ligand contact to L-serine. 358–361 (EISS) lines the ATP pocket. S393 is an L-serine binding site.

The protein belongs to the class-II aminoacyl-tRNA synthetase family. Type-1 seryl-tRNA synthetase subfamily. In terms of assembly, homodimer. The tRNA molecule binds across the dimer.

Its subcellular location is the cytoplasm. The catalysed reaction is tRNA(Ser) + L-serine + ATP = L-seryl-tRNA(Ser) + AMP + diphosphate + H(+). It catalyses the reaction tRNA(Sec) + L-serine + ATP = L-seryl-tRNA(Sec) + AMP + diphosphate + H(+). The protein operates within aminoacyl-tRNA biosynthesis; selenocysteinyl-tRNA(Sec) biosynthesis; L-seryl-tRNA(Sec) from L-serine and tRNA(Sec): step 1/1. Its function is as follows. Catalyzes the attachment of serine to tRNA(Ser). Is also able to aminoacylate tRNA(Sec) with serine, to form the misacylated tRNA L-seryl-tRNA(Sec), which will be further converted into selenocysteinyl-tRNA(Sec). The protein is Serine--tRNA ligase of Cupriavidus metallidurans (strain ATCC 43123 / DSM 2839 / NBRC 102507 / CH34) (Ralstonia metallidurans).